We begin with the raw amino-acid sequence, 201 residues long: Recombination protein RecR (201 aa).

The C4-type zinc finger occupies 57-72; it reads CKYCSNFGNKDECDIC. The region spanning 80 to 176 is the Toprim domain; that stretch reads TKLMIVTTNE…QIYRIGFGIP (97 aa).

This sequence belongs to the RecR family.

May play a role in DNA repair. It seems to be involved in an RecBC-independent recombinational process of DNA repair. It may act with RecF and RecO. In Ureaplasma urealyticum serovar 10 (strain ATCC 33699 / Western), this protein is Recombination protein RecR.